The chain runs to 417 residues: Serine hydroxymethyltransferase (417 aa).

Residues Leu121 and 125 to 127 each bind (6S)-5,6,7,8-tetrahydrofolate; that span reads GHL. Position 229 is an N6-(pyridoxal phosphate)lysine (Lys229). 355 to 357 is a binding site for (6S)-5,6,7,8-tetrahydrofolate; the sequence is SPF.

It belongs to the SHMT family. As to quaternary structure, homodimer. Pyridoxal 5'-phosphate is required as a cofactor.

It localises to the cytoplasm. The catalysed reaction is (6R)-5,10-methylene-5,6,7,8-tetrahydrofolate + glycine + H2O = (6S)-5,6,7,8-tetrahydrofolate + L-serine. It functions in the pathway one-carbon metabolism; tetrahydrofolate interconversion. The protein operates within amino-acid biosynthesis; glycine biosynthesis; glycine from L-serine: step 1/1. Functionally, catalyzes the reversible interconversion of serine and glycine with tetrahydrofolate (THF) serving as the one-carbon carrier. This reaction serves as the major source of one-carbon groups required for the biosynthesis of purines, thymidylate, methionine, and other important biomolecules. Also exhibits THF-independent aldolase activity toward beta-hydroxyamino acids, producing glycine and aldehydes, via a retro-aldol mechanism. In Salmonella arizonae (strain ATCC BAA-731 / CDC346-86 / RSK2980), this protein is Serine hydroxymethyltransferase.